A 242-amino-acid chain; its full sequence is Vacuole localized DSC protein 1 (242 aa).

2 helical membrane passes run 128-148 and 152-172; these read PYGF…PTAF and LLLV…INGS.

As to quaternary structure, part of the vacuole-localized DSC E3 ligase complex composed of at least TUL1, DSC2, DSC3, UBX3, CDC48 and VLD1.

The protein resides in the vacuole membrane. Functionally, component of the vacuole-localized DSC E3 ubiquitin ligase complex involved in the targeting of the complex to the vacuole membrane via the AP3 pathway to ubiquinate vacuolar membrane proteins. Competes with GLD1 to determine the subcellular localizations of the DSC complex. This Saccharomyces cerevisiae (strain ATCC 204508 / S288c) (Baker's yeast) protein is Vacuole localized DSC protein 1.